Here is a 733-residue protein sequence, read N- to C-terminus: Ribosomal protein S6 kinase alpha-2 (733 aa).

The region spanning 59–318 is the Protein kinase 1 domain; the sequence is FELLKVLGQG…VEEIKRHPFF (260 aa). ATP contacts are provided by residues 65–73 and Lys91; that span reads LGQGSYGKV. The active-site Proton acceptor is the Asp184. Ser218 bears the Phosphoserine; by PDPK1 mark. Positions 319-388 constitute an AGC-kinase C-terminal domain; that stretch reads VTIDWNKLYR…VASSLVQEPS (70 aa). Ser377 bears the Phosphoserine mark. The region spanning 415–672 is the Protein kinase 2 domain; it reads YEIKEDIGVG…AVQVLKHPWI (258 aa). Residues 421 to 429 and Lys444 contribute to the ATP site; that span reads IGVGSYSVC. The active-site Proton acceptor is Asp532.

This sequence belongs to the protein kinase superfamily. AGC Ser/Thr protein kinase family. S6 kinase subfamily. In terms of assembly, forms a complex with either MAPK1/ERK2 or MAPK3/ERK1 in quiescent cells. Transiently dissociates following mitogenic stimulation. Interacts with FBXO5; cooperate to induce the metaphase arrest of early blastomeres; increases and stabilizes interaction of FBXO5 with CDC20. Requires Mg(2+) as cofactor. In terms of processing, activated by phosphorylation at Ser-218 by PDPK1. Autophosphorylated on Ser-377, as part of the activation process. May be phosphorylated at Thr-356 and Ser-360 by MAPK1/ERK2 and MAPK3/ERK1. N-terminal myristoylation results in an activated kinase in the absence of added growth factors.

It is found in the nucleus. The protein localises to the cytoplasm. The catalysed reaction is L-seryl-[protein] + ATP = O-phospho-L-seryl-[protein] + ADP + H(+). It catalyses the reaction L-threonyl-[protein] + ATP = O-phospho-L-threonyl-[protein] + ADP + H(+). Its activity is regulated as follows. Upon extracellular signal or mitogen stimulation, phosphorylated at Thr-570 in the C-terminal kinase domain (CTKD) by MAPK1/ERK2 and MAPK3/ERK1. The activated CTKD then autophosphorylates Ser-377, allowing binding of PDPK1, which in turn phosphorylates Ser-218 in the N-terminal kinase domain (NTDK) leading to the full activation of the protein and subsequent phosphorylation of the substrates by the NTKD. Serine/threonine-protein kinase that acts downstream of ERK (MAPK1/ERK2 and MAPK3/ERK1) signaling and mediates mitogenic and stress-induced activation of transcription factors, regulates translation, and mediates cellular proliferation, survival, and differentiation. May function as tumor suppressor in epithelial ovarian cancer cells. The sequence is that of Ribosomal protein S6 kinase alpha-2 (Rps6ka2) from Mus musculus (Mouse).